A 470-amino-acid chain; its full sequence is Probable tocopherol cyclase, chloroplastic (470 aa).

Residues 1 to 61 constitute a chloroplast transit peptide; that stretch reads MDLAAAAVAV…APTPRDRALR (61 aa). Residues 14 to 48 form a disordered region; the sequence is RPAPPPRRCAPRRHRRALAPRAASSSPSPSTAVAA. Over residues 22 to 31 the composition is skewed to basic residues; that stretch reads CAPRRHRRAL. Low complexity predominate over residues 32–48; it reads APRAASSSPSPSTAVAA.

In terms of tissue distribution, expressed in the roots, stems, leaves and spikelets.

It is found in the plastid. It localises to the chloroplast. The protein localises to the plastoglobule. It functions in the pathway cofactor biosynthesis; tocopherol biosynthesis. Involved in the synthesis of both tocopherols and tocotrienols (vitamin E), which presumably protect photosynthetic complexes from oxidative stress. Catalyzes the conversion of 2-methyl-6-phytyl-1,4-hydroquinone and 2,3-dimethyl-5-phytyl-1,4-hydroquinone (DMPQ) to delta- and gamma-tocopherol respectively. Also converts 2,3-dimethyl-5-geranylgeranyl-1,4-hydroquinone (DMGQ) to gamma-tocotrienol. This is Probable tocopherol cyclase, chloroplastic (VTE1) from Oryza sativa subsp. japonica (Rice).